Consider the following 177-residue polypeptide: NADH-quinone oxidoreductase subunit E (177 aa).

[2Fe-2S] cluster contacts are provided by Cys-93, Cys-98, Cys-134, and Cys-138.

The protein belongs to the complex I 24 kDa subunit family. [2Fe-2S] cluster serves as cofactor.

The enzyme catalyses a quinone + NADH + 5 H(+)(in) = a quinol + NAD(+) + 4 H(+)(out). Its function is as follows. NDH-1 shuttles electrons from NADH, via FMN and iron-sulfur (Fe-S) centers, to quinones in the respiratory chain. Couples the redox reaction to proton translocation (for every two electrons transferred, four hydrogen ions are translocated across the cytoplasmic membrane), and thus conserves the redox energy in a proton gradient. The sequence is that of NADH-quinone oxidoreductase subunit E (nuoE) from Rickettsia prowazekii (strain Madrid E).